The chain runs to 89 residues: Small ribosomal subunit protein uS15 (89 aa).

Residues Met-1 to Glu-10 are compositionally biased toward basic and acidic residues. The interval Met-1–Ser-24 is disordered.

It belongs to the universal ribosomal protein uS15 family. Part of the 30S ribosomal subunit. Forms a bridge to the 50S subunit in the 70S ribosome, contacting the 23S rRNA.

One of the primary rRNA binding proteins, it binds directly to 16S rRNA where it helps nucleate assembly of the platform of the 30S subunit by binding and bridging several RNA helices of the 16S rRNA. In terms of biological role, forms an intersubunit bridge (bridge B4) with the 23S rRNA of the 50S subunit in the ribosome. The sequence is that of Small ribosomal subunit protein uS15 from Novosphingobium aromaticivorans (strain ATCC 700278 / DSM 12444 / CCUG 56034 / CIP 105152 / NBRC 16084 / F199).